The chain runs to 264 residues: Short-chain dehydrogenase/reductase ucsE (264 aa).

A helical membrane pass occupies residues 13 to 32; the sequence is LVVVVGGTSGLGFAVAQAAV. The NADP(+) site is built by Leu23, Ser43, and Asp74. Residue Asn125 is glycosylated (N-linked (GlcNAc...) asparagine). Residues Arg130 and Lys139 each contribute to the NADP(+) site. Ser157 (proton donor) is an active-site residue. The NADP(+) site is built by Val202 and Thr204.

It belongs to the short-chain dehydrogenases/reductases (SDR) family. Requires NADP(+) as cofactor.

The protein resides in the membrane. It participates in mycotoxin biosynthesis. In terms of biological role, short-chain dehydrogenase/reductase; part of the gene cluster that mediates the biosynthesis of UCS1025A, a member of the pyrrolizidinone family that acts as a strong telomerase inhibitor and displays potent antibacterial and antitumor properties. These compounds share a hemiaminal-containing pyrrolizidinone core fused with a gamma-lactone, giving a furopyrrolizidine that is connected to a decalin fragment. The polyketide synthase module (PKS) of the PKS-NRPS ucsA is responsible for the synthesis of the polyketide backbone via the condensation of an acetyl-CoA starter unit with 6 malonyl-CoA units. The downstream nonribosomal peptide synthetase (NRPS) module then amidates the carboxyl end of the polyketide with a 2S,3S-methylproline derived from L-isoleucine by the 2-oxoglutarate-dependent dioxygenase ucsF which converts L-isoleucine to (4S,5S)-4-methylpyrroline-5-carboxylate that is further converted to 2S,3S-methylproline by the pyrroline-5-carboxylate reductase ucsG. Reductive release of the completed aminoacyl polyketide from the assembly line can form the 3-pyrrolin-2-one structure via an intramolecular Knoevenagel reaction. Because ucsA lacks a designated enoylreductase (ER) domain, the required activity is provided the enoyl reductase ucsL. This keto acyclic precursor is the substrate of the Diels-Alderase ucsH, that catalyzes the Diels-Alder cycloaddition. Oxidation of the 3S-methyl group to a carboxylate by the cytochrome P450 monooxygenase ucsK allows an oxa-Michael cyclization that might involve the reductase/dehydrogenase ucsI and which furnishes the furopyrrolizidine. The oxidase ucsJ likely plays a critical role in stereoselective reduction of the C5-C6 double bond to afford the required R-configured carboxylate group. Further enolization and oxidation at C5 by an unidentified enzyme affords the last intermediate that can undergo oxa-Michael cyclization to yield UCS1025A. The polypeptide is Short-chain dehydrogenase/reductase ucsE (Acremonium sp).